The sequence spans 78 residues: Ubiquitin-like protein 1 (78 aa).

It belongs to the ubiquitin family.

The chain is Ubiquitin-like protein 1 (ubl1) from Schizosaccharomyces pombe (strain 972 / ATCC 24843) (Fission yeast).